A 781-amino-acid chain; its full sequence is uncharacterized protein (781 aa).

The segment at 1-34 (MNIAEEPSDEVISSGPEDTDICSQQTSASAEAGD) is disordered. S29 bears the Phosphoserine mark. RRM domains are found at residues 195-273 (GNIF…YHVE) and 295-418 (RCLF…KAVQ). The segment at 345–375 (SNTRSSSSVSFNEEGSVESNKSSNNTNGNAQ) is disordered. The segment covering 347 to 364 (TRSSSSVSFNEEGSVESN) has biased composition (low complexity). A compositionally biased stretch (polar residues) spans 365–374 (KSSNNTNGNA). A phosphoserine mark is found at S433, S435, S482, and S485. Position 486 is a phosphothreonine (T486). Phosphoserine is present on S501. The 99-residue stretch at 540 to 638 (SNLYVKHIPL…QVLSVSFAQK (99 aa)) folds into the RRM 3 domain. The disordered stretch occupies residues 640-668 (GNLSSSDDDDQSQTDNSSKFQNFQPHNDY).

In terms of assembly, interacts with RBG1.

This is an uncharacterized protein from Saccharomyces cerevisiae (strain ATCC 204508 / S288c) (Baker's yeast).